Here is a 301-residue protein sequence, read N- to C-terminus: UDP-N-acetylenolpyruvoylglucosamine reductase (301 aa).

Residues 24-190 (RVGGLAQFYD…VSAQLQLQPG (167 aa)) form the FAD-binding PCMH-type domain. Residue R169 is part of the active site. S220 functions as the Proton donor in the catalytic mechanism. The active site involves E290.

The protein belongs to the MurB family. FAD serves as cofactor.

The protein resides in the cytoplasm. It carries out the reaction UDP-N-acetyl-alpha-D-muramate + NADP(+) = UDP-N-acetyl-3-O-(1-carboxyvinyl)-alpha-D-glucosamine + NADPH + H(+). It functions in the pathway cell wall biogenesis; peptidoglycan biosynthesis. Functionally, cell wall formation. This is UDP-N-acetylenolpyruvoylglucosamine reductase from Synechococcus sp. (strain ATCC 27144 / PCC 6301 / SAUG 1402/1) (Anacystis nidulans).